The chain runs to 869 residues: Bifunctional uridylyltransferase/uridylyl-removing enzyme (869 aa).

Residues 1–332 (MTDTPAERPD…QFDGEATPEP (332 aa)) are uridylyltransferase. The interval 333–691 (LGGGFSLRRG…RRAVPDNDAL (359 aa)) is uridylyl-removing. The HD domain occupies 450–572 (VDQHTLMVLR…VGTRERLDYL (123 aa)). ACT domains lie at 692–774 (EVFV…RAVP) and 798–869 (RISL…LDPV).

Belongs to the GlnD family. The cofactor is Mg(2+).

It carries out the reaction [protein-PII]-L-tyrosine + UTP = [protein-PII]-uridylyl-L-tyrosine + diphosphate. It catalyses the reaction [protein-PII]-uridylyl-L-tyrosine + H2O = [protein-PII]-L-tyrosine + UMP + H(+). With respect to regulation, uridylyltransferase (UTase) activity is inhibited by glutamine, while glutamine activates uridylyl-removing (UR) activity. Functionally, modifies, by uridylylation and deuridylylation, the PII regulatory proteins (GlnB and homologs), in response to the nitrogen status of the cell that GlnD senses through the glutamine level. Under low glutamine levels, catalyzes the conversion of the PII proteins and UTP to PII-UMP and PPi, while under higher glutamine levels, GlnD hydrolyzes PII-UMP to PII and UMP (deuridylylation). Thus, controls uridylylation state and activity of the PII proteins, and plays an important role in the regulation of nitrogen assimilation and metabolism. This Xanthomonas axonopodis pv. citri (strain 306) protein is Bifunctional uridylyltransferase/uridylyl-removing enzyme.